The chain runs to 194 residues: RNA pyrophosphohydrolase (194 aa).

The 144-residue stretch at G6 to Q149 folds into the Nudix hydrolase domain. The Nudix box motif lies at G38–G59. A disordered region spans residues P158–E194. The segment covering R179 to E194 has biased composition (basic and acidic residues).

Belongs to the Nudix hydrolase family. RppH subfamily. It depends on a divalent metal cation as a cofactor.

In terms of biological role, accelerates the degradation of transcripts by removing pyrophosphate from the 5'-end of triphosphorylated RNA, leading to a more labile monophosphorylated state that can stimulate subsequent ribonuclease cleavage. In Janthinobacterium sp. (strain Marseille) (Minibacterium massiliensis), this protein is RNA pyrophosphohydrolase.